A 573-amino-acid polypeptide reads, in one-letter code: Delta 8-(E)-sphingolipid desaturase (573 aa).

A Cytochrome b5 heme-binding domain is found at S2–D77. Heme contacts are provided by H37 and H60. A helical membrane pass occupies residues L228–L248. The Histidine box-1 signature appears at H260–H264. Residues V273–W293 traverse the membrane as a helical segment. Residues H297 to H301 carry the Histidine box-2 motif. Helical transmembrane passes span Y353 to M372, L393 to P413, and V422 to A442. The Histidine box-3 signature appears at Q481–H485.

This sequence belongs to the fatty acid desaturase type 1 family.

The protein resides in the membrane. The catalysed reaction is an N-acylsphing-4-enine + 2 Fe(II)-[cytochrome b5] + O2 + 2 H(+) = a (4E,8E)-4-sphinga-4,8-dienine ceramide + 2 Fe(III)-[cytochrome b5] + 2 H2O. The protein operates within lipid metabolism; sphingolipid metabolism. In terms of biological role, delta(8)-fatty-acid desaturase which introduces a double bond at the 8-position in the long-chain base (LCB) of ceramides. Required for the formation of the di-unsaturated sphingoid base (E,E)-sphinga-4,8-dienine during glucosylceramide (GluCer) biosynthesis. The chain is Delta 8-(E)-sphingolipid desaturase from Kluyveromyces lactis (strain ATCC 8585 / CBS 2359 / DSM 70799 / NBRC 1267 / NRRL Y-1140 / WM37) (Yeast).